Consider the following 278-residue polypeptide: tRNA (guanine-N(7)-)-methyltransferase (278 aa).

S-adenosyl-L-methionine contacts are provided by residues glycine 63, 86-87, 119-120, and leucine 139; these read EL and NA. Aspartate 142 is an active-site residue. 217–219 serves as a coordination point for S-adenosyl-L-methionine; it reads TEE. The interval 259–278 is disordered; it reads IDSTTTTTTSTATITEVESK. Over residues 261–278 the composition is skewed to low complexity; the sequence is STTTTTTSTATITEVESK.

The protein belongs to the class I-like SAM-binding methyltransferase superfamily. TrmB family.

It is found in the nucleus. The enzyme catalyses guanosine(46) in tRNA + S-adenosyl-L-methionine = N(7)-methylguanosine(46) in tRNA + S-adenosyl-L-homocysteine. It participates in tRNA modification; N(7)-methylguanine-tRNA biosynthesis. In terms of biological role, catalyzes the formation of N(7)-methylguanine at position 46 (m7G46) in tRNA. The sequence is that of tRNA (guanine-N(7)-)-methyltransferase (mettl1) from Dictyostelium discoideum (Social amoeba).